Here is a 77-residue protein sequence, read N- to C-terminus: Large ribosomal subunit protein uL24 (77 aa).

Residues 42–61 (KKHQKPSQTNANGGVVESEG) are disordered.

The protein belongs to the universal ribosomal protein uL24 family. As to quaternary structure, part of the 50S ribosomal subunit.

Its function is as follows. One of two assembly initiator proteins, it binds directly to the 5'-end of the 23S rRNA, where it nucleates assembly of the 50S subunit. In terms of biological role, one of the proteins that surrounds the polypeptide exit tunnel on the outside of the subunit. This Lactobacillus helveticus (strain DPC 4571) protein is Large ribosomal subunit protein uL24.